The following is a 59-amino-acid chain: Large ribosomal subunit protein bL32 (59 aa).

Residues 1-59 (MAVQQNKKSPSKRGMHRSHDFLTTSPLAVEPSTGEVHLRHHISPNGYYRGKKVVKTKND) form a disordered region. Positions 49–59 (RGKKVVKTKND) are enriched in basic residues.

Belongs to the bacterial ribosomal protein bL32 family.

The protein is Large ribosomal subunit protein bL32 of Burkholderia mallei (strain NCTC 10247).